The following is a 412-amino-acid chain: Glutamyl-tRNA reductase (412 aa).

Residues 52 to 55 (TCNR), S108, 113 to 115 (EYE), and Q119 each bind substrate. C53 (nucleophile) is an active-site residue. Residue 189–194 (GAGEIG) participates in NADP(+) binding.

The protein belongs to the glutamyl-tRNA reductase family. As to quaternary structure, homodimer.

The catalysed reaction is (S)-4-amino-5-oxopentanoate + tRNA(Glu) + NADP(+) = L-glutamyl-tRNA(Glu) + NADPH + H(+). It functions in the pathway porphyrin-containing compound metabolism; protoporphyrin-IX biosynthesis; 5-aminolevulinate from L-glutamyl-tRNA(Glu): step 1/2. Functionally, catalyzes the NADPH-dependent reduction of glutamyl-tRNA(Glu) to glutamate 1-semialdehyde (GSA). The protein is Glutamyl-tRNA reductase of Sulfurisphaera tokodaii (strain DSM 16993 / JCM 10545 / NBRC 100140 / 7) (Sulfolobus tokodaii).